The sequence spans 80 residues: Cell division protein ZapB (80 aa).

Positions 3–80 form a coiled coil; the sequence is FEVLEKLEAK…ALLGKMEDVE (78 aa).

It belongs to the ZapB family. As to quaternary structure, homodimer. The ends of the coiled-coil dimer bind to each other, forming polymers. Interacts with FtsZ.

It localises to the cytoplasm. In terms of biological role, non-essential, abundant cell division factor that is required for proper Z-ring formation. It is recruited early to the divisome by direct interaction with FtsZ, stimulating Z-ring assembly and thereby promoting cell division earlier in the cell cycle. Its recruitment to the Z-ring requires functional FtsA or ZipA. This is Cell division protein ZapB from Vibrio vulnificus (strain CMCP6).